The chain runs to 137 residues: Large ribosomal subunit protein uL16 (137 aa).

Belongs to the universal ribosomal protein uL16 family. As to quaternary structure, part of the 50S ribosomal subunit.

In terms of biological role, binds 23S rRNA and is also seen to make contacts with the A and possibly P site tRNAs. This is Large ribosomal subunit protein uL16 from Chlamydia abortus (strain DSM 27085 / S26/3) (Chlamydophila abortus).